A 155-amino-acid chain; its full sequence is 6,7-dimethyl-8-ribityllumazine synthase (155 aa).

5-amino-6-(D-ribitylamino)uracil is bound by residues Phe-24, Ala-58–Glu-60, and Val-82–Ile-84. Ala-87–Thr-88 lines the (2S)-2-hydroxy-3-oxobutyl phosphate pocket. The Proton donor role is filled by His-90. Position 115 (Phe-115) interacts with 5-amino-6-(D-ribitylamino)uracil. Arg-129 is a binding site for (2S)-2-hydroxy-3-oxobutyl phosphate.

Belongs to the DMRL synthase family.

It catalyses the reaction (2S)-2-hydroxy-3-oxobutyl phosphate + 5-amino-6-(D-ribitylamino)uracil = 6,7-dimethyl-8-(1-D-ribityl)lumazine + phosphate + 2 H2O + H(+). It functions in the pathway cofactor biosynthesis; riboflavin biosynthesis; riboflavin from 2-hydroxy-3-oxobutyl phosphate and 5-amino-6-(D-ribitylamino)uracil: step 1/2. In terms of biological role, catalyzes the formation of 6,7-dimethyl-8-ribityllumazine by condensation of 5-amino-6-(D-ribitylamino)uracil with 3,4-dihydroxy-2-butanone 4-phosphate. This is the penultimate step in the biosynthesis of riboflavin. This is 6,7-dimethyl-8-ribityllumazine synthase from Chloroherpeton thalassium (strain ATCC 35110 / GB-78).